Reading from the N-terminus, the 242-residue chain is NAD-dependent protein deacylase 1 (242 aa).

Residues 1 to 242 (MDFKILKEKL…FAMKFEEKEG (242 aa)) enclose the Deacetylase sirtuin-type domain. Residue 21–40 (GAGISKESGIPTFRGEDGLW) coordinates NAD(+). 2 residues coordinate substrate: Tyr65 and Arg68. 99–102 (QNVD) contributes to the NAD(+) binding site. The active-site Proton acceptor is the His117. Positions 125, 128, 146, and 149 each coordinate Zn(2+). Residues 186–188 (GTS) and Glu241 each bind NAD(+).

Belongs to the sirtuin family. Class III subfamily. It depends on Zn(2+) as a cofactor.

The protein localises to the cytoplasm. It carries out the reaction N(6)-acetyl-L-lysyl-[protein] + NAD(+) + H2O = 2''-O-acetyl-ADP-D-ribose + nicotinamide + L-lysyl-[protein]. The enzyme catalyses N(6)-succinyl-L-lysyl-[protein] + NAD(+) + H2O = 2''-O-succinyl-ADP-D-ribose + nicotinamide + L-lysyl-[protein]. In terms of biological role, NAD-dependent lysine deacetylase and desuccinylase that specifically removes acetyl and succinyl groups on target proteins. Modulates the activities of several proteins which are inactive in their acylated form. This Caldanaerobacter subterraneus subsp. tengcongensis (strain DSM 15242 / JCM 11007 / NBRC 100824 / MB4) (Thermoanaerobacter tengcongensis) protein is NAD-dependent protein deacylase 1.